The sequence spans 478 residues: Sulfate adenylyltransferase subunit 1 (478 aa).

Positions 24–240 (KSLLRFLTCG…VLENVDIDAD (217 aa)) constitute a tr-type G domain. A G1 region spans residues 33–40 (GSVDDGKS). 33-40 (GSVDDGKS) contacts GTP. The tract at residues 91–95 (GITID) is G2. The tract at residues 112 to 115 (DTPG) is G3. Residues 112–116 (DTPGH) and 167–170 (NKMD) contribute to the GTP site. Residues 167 to 170 (NKMD) form a G4 region. A G5 region spans residues 206–208 (SAL).

The protein belongs to the TRAFAC class translation factor GTPase superfamily. Classic translation factor GTPase family. CysN/NodQ subfamily. As to quaternary structure, heterodimer composed of CysD, the smaller subunit, and CysN.

The enzyme catalyses sulfate + ATP + H(+) = adenosine 5'-phosphosulfate + diphosphate. Its pathway is sulfur metabolism; hydrogen sulfide biosynthesis; sulfite from sulfate: step 1/3. With CysD forms the ATP sulfurylase (ATPS) that catalyzes the adenylation of sulfate producing adenosine 5'-phosphosulfate (APS) and diphosphate, the first enzymatic step in sulfur assimilation pathway. APS synthesis involves the formation of a high-energy phosphoric-sulfuric acid anhydride bond driven by GTP hydrolysis by CysN coupled to ATP hydrolysis by CysD. This is Sulfate adenylyltransferase subunit 1 from Aliivibrio fischeri (strain ATCC 700601 / ES114) (Vibrio fischeri).